Here is a 612-residue protein sequence, read N- to C-terminus: Dihydroxy-acid dehydratase (612 aa).

Mg(2+) is bound at residue aspartate 81. Cysteine 122 is a [2Fe-2S] cluster binding site. Residues aspartate 123 and lysine 124 each coordinate Mg(2+). Lysine 124 is subject to N6-carboxylysine. [2Fe-2S] cluster is bound at residue cysteine 196. Position 492 (glutamate 492) interacts with Mg(2+). Serine 518 functions as the Proton acceptor in the catalytic mechanism.

Belongs to the IlvD/Edd family. As to quaternary structure, homodimer. It depends on [2Fe-2S] cluster as a cofactor. Mg(2+) is required as a cofactor.

The catalysed reaction is (2R)-2,3-dihydroxy-3-methylbutanoate = 3-methyl-2-oxobutanoate + H2O. It catalyses the reaction (2R,3R)-2,3-dihydroxy-3-methylpentanoate = (S)-3-methyl-2-oxopentanoate + H2O. It participates in amino-acid biosynthesis; L-isoleucine biosynthesis; L-isoleucine from 2-oxobutanoate: step 3/4. The protein operates within amino-acid biosynthesis; L-valine biosynthesis; L-valine from pyruvate: step 3/4. Its function is as follows. Functions in the biosynthesis of branched-chain amino acids. Catalyzes the dehydration of (2R,3R)-2,3-dihydroxy-3-methylpentanoate (2,3-dihydroxy-3-methylvalerate) into 2-oxo-3-methylpentanoate (2-oxo-3-methylvalerate) and of (2R)-2,3-dihydroxy-3-methylbutanoate (2,3-dihydroxyisovalerate) into 2-oxo-3-methylbutanoate (2-oxoisovalerate), the penultimate precursor to L-isoleucine and L-valine, respectively. The chain is Dihydroxy-acid dehydratase from Paracoccus denitrificans (strain Pd 1222).